A 237-amino-acid polypeptide reads, in one-letter code: Large ribosomal subunit protein uL2 (237 aa).

A compositionally biased stretch (polar residues) spans Met-1–Gly-11. Disordered stretches follow at residues Met-1–Gly-26 and Pro-204–Thr-237. Basic residues-rich tracts occupy residues Gly-13 to Gly-26 and Lys-228 to Thr-237.

The protein belongs to the universal ribosomal protein uL2 family. In terms of assembly, part of the 50S ribosomal subunit. Forms a bridge to the 30S subunit in the 70S ribosome.

One of the primary rRNA binding proteins. Required for association of the 30S and 50S subunits to form the 70S ribosome, for tRNA binding and peptide bond formation. It has been suggested to have peptidyltransferase activity; this is somewhat controversial. Makes several contacts with the 16S rRNA in the 70S ribosome. In Methanococcus vannielii, this protein is Large ribosomal subunit protein uL2.